The primary structure comprises 201 residues: Large ribosomal subunit protein uL4 (201 aa).

Positions 45 to 66 are disordered; the sequence is AQLTRSEVSGGGKKPWRQKGTG.

It belongs to the universal ribosomal protein uL4 family. Part of the 50S ribosomal subunit.

One of the primary rRNA binding proteins, this protein initially binds near the 5'-end of the 23S rRNA. It is important during the early stages of 50S assembly. It makes multiple contacts with different domains of the 23S rRNA in the assembled 50S subunit and ribosome. Functionally, forms part of the polypeptide exit tunnel. This is Large ribosomal subunit protein uL4 from Aeromonas salmonicida (strain A449).